The primary structure comprises 75 residues: Metallothionein-like protein 1 (75 aa).

The protein belongs to the metallothionein superfamily. Type 15 family.

In terms of biological role, metallothioneins have a high content of cysteine residues that bind various heavy metals. The sequence is that of Metallothionein-like protein 1 from Cicer arietinum (Chickpea).